A 120-amino-acid chain; its full sequence is Large ribosomal subunit protein bL20 (120 aa).

This sequence belongs to the bacterial ribosomal protein bL20 family.

Its function is as follows. Binds directly to 23S ribosomal RNA and is necessary for the in vitro assembly process of the 50S ribosomal subunit. It is not involved in the protein synthesizing functions of that subunit. This Pseudoalteromonas translucida (strain TAC 125) protein is Large ribosomal subunit protein bL20.